Consider the following 122-residue polypeptide: Large ribosomal subunit protein uL14c (122 aa).

It belongs to the universal ribosomal protein uL14 family. In terms of assembly, part of the 50S ribosomal subunit.

It is found in the plastid. The protein localises to the chloroplast. Binds to 23S rRNA. The chain is Large ribosomal subunit protein uL14c from Cucumis sativus (Cucumber).